We begin with the raw amino-acid sequence, 386 residues long: Putative nickel insertion protein (386 aa).

It belongs to the LarC family.

The protein is Putative nickel insertion protein of Dictyoglomus thermophilum (strain ATCC 35947 / DSM 3960 / H-6-12).